The primary structure comprises 219 residues: MNLSCSLVLLGGGKGERFNSLQPKQYTHLCGEPLILHALHAYQRLPFVQEVVVVCEEQYRELFLPYSVKFASPGTLRQDSVFSGLQQVFTPWVCIHDGVRPFVYADEVIEVCSAARKTGAAALASPATYTIKSCAPVRTLDRDALAVIHTPQCLDTEVLREGLLLARAMDFSLSDDTEAAELLGIEPTLVFSNRVQIKVTYPEDLLFAETLLSKSSTYK.

Belongs to the IspD/TarI cytidylyltransferase family. IspD subfamily.

The enzyme catalyses 2-C-methyl-D-erythritol 4-phosphate + CTP + H(+) = 4-CDP-2-C-methyl-D-erythritol + diphosphate. It participates in isoprenoid biosynthesis; isopentenyl diphosphate biosynthesis via DXP pathway; isopentenyl diphosphate from 1-deoxy-D-xylulose 5-phosphate: step 2/6. Its function is as follows. Catalyzes the formation of 4-diphosphocytidyl-2-C-methyl-D-erythritol from CTP and 2-C-methyl-D-erythritol 4-phosphate (MEP). This chain is 2-C-methyl-D-erythritol 4-phosphate cytidylyltransferase, found in Chlamydia trachomatis serovar L2 (strain ATCC VR-902B / DSM 19102 / 434/Bu).